Here is a 330-residue protein sequence, read N- to C-terminus: Aspartate--ammonia ligase (330 aa).

This sequence belongs to the class-II aminoacyl-tRNA synthetase family. AsnA subfamily.

It is found in the cytoplasm. It catalyses the reaction L-aspartate + NH4(+) + ATP = L-asparagine + AMP + diphosphate + H(+). It functions in the pathway amino-acid biosynthesis; L-asparagine biosynthesis; L-asparagine from L-aspartate (ammonia route): step 1/1. In Streptococcus pyogenes serotype M1, this protein is Aspartate--ammonia ligase.